A 433-amino-acid polypeptide reads, in one-letter code: Divergent protein kinase domain 2B (433 aa).

An N-terminal signal peptide occupies residues 1–29 (MEPRLGPKAAALHLGWPFLLLWVSGLSYS). A glycan (N-linked (GlcNAc...) asparagine) is linked at Asn100.

This sequence belongs to the DIPK family.

It localises to the secreted. This is Divergent protein kinase domain 2B (DIPK2B) from Bos taurus (Bovine).